A 241-amino-acid polypeptide reads, in one-letter code: DnaA regulatory inactivator Hda (241 aa).

It belongs to the DnaA family. HdA subfamily. In terms of assembly, the active form seems to be an ADP-bound monomer. Forms the RIDA complex (regulatory inactivation of DnaA) of ATP-DnaA, ADP-Hda and the DNA-loaded beta sliding clamp (dnaN).

Functionally, mediates the interaction of DNA replication initiator protein DnaA with DNA polymerase subunit beta sliding clamp (dnaN). Stimulates hydrolysis of ATP-DnaA to ADP-DnaA, rendering DnaA inactive for reinitiation, a process called regulatory inhibition of DnaA or RIDA. In Salmonella arizonae (strain ATCC BAA-731 / CDC346-86 / RSK2980), this protein is DnaA regulatory inactivator Hda.